The following is a 180-amino-acid chain: NADH-quinone oxidoreductase subunit I (180 aa).

4Fe-4S ferredoxin-type domains follow at residues 48 to 80 (IVLT…LQKA) and 90 to 119 (EFFR…LTPD). [4Fe-4S] cluster is bound by residues C60, C63, C66, C70, C99, C102, C105, and C109.

Belongs to the complex I 23 kDa subunit family. NDH-1 is composed of 13 different subunits. Subunits NuoA, H, J, K, L, M, N constitute the membrane sector of the complex. It depends on [4Fe-4S] cluster as a cofactor.

Its subcellular location is the cell inner membrane. The catalysed reaction is a quinone + NADH + 5 H(+)(in) = a quinol + NAD(+) + 4 H(+)(out). Functionally, NDH-1 shuttles electrons from NADH, via FMN and iron-sulfur (Fe-S) centers, to quinones in the respiratory chain. The immediate electron acceptor for the enzyme in this species is believed to be ubiquinone. Couples the redox reaction to proton translocation (for every two electrons transferred, four hydrogen ions are translocated across the cytoplasmic membrane), and thus conserves the redox energy in a proton gradient. The sequence is that of NADH-quinone oxidoreductase subunit I from Edwardsiella ictaluri (strain 93-146).